The chain runs to 207 residues: Guanylate kinase (207 aa).

A Guanylate kinase-like domain is found at glycine 6–glutamate 185. Glycine 13–glycine 20 contributes to the ATP binding site.

Belongs to the guanylate kinase family.

It localises to the cytoplasm. It catalyses the reaction GMP + ATP = GDP + ADP. In terms of biological role, essential for recycling GMP and indirectly, cGMP. This Staphylococcus saprophyticus subsp. saprophyticus (strain ATCC 15305 / DSM 20229 / NCIMB 8711 / NCTC 7292 / S-41) protein is Guanylate kinase.